Here is a 402-residue protein sequence, read N- to C-terminus: 4-hydroxy-3-methylbut-2-enyl diphosphate reductase (402 aa).

Cys66 lines the [4Fe-4S] cluster pocket. A (2E)-4-hydroxy-3-methylbut-2-enyl diphosphate-binding site is contributed by His96. His96 contributes to the dimethylallyl diphosphate binding site. His96 lines the isopentenyl diphosphate pocket. Cys157 is a binding site for [4Fe-4S] cluster. Residue His185 participates in (2E)-4-hydroxy-3-methylbut-2-enyl diphosphate binding. Dimethylallyl diphosphate is bound at residue His185. His185 contributes to the isopentenyl diphosphate binding site. Glu187 acts as the Proton donor in catalysis. A (2E)-4-hydroxy-3-methylbut-2-enyl diphosphate-binding site is contributed by Thr250. Cys288 contributes to the [4Fe-4S] cluster binding site. Positions 317, 318, 319, and 379 each coordinate (2E)-4-hydroxy-3-methylbut-2-enyl diphosphate. The dimethylallyl diphosphate site is built by Ser317, Ser318, Asn319, and Ser379. Ser317, Ser318, Asn319, and Ser379 together coordinate isopentenyl diphosphate.

Belongs to the IspH family. It depends on [4Fe-4S] cluster as a cofactor.

The catalysed reaction is isopentenyl diphosphate + 2 oxidized [2Fe-2S]-[ferredoxin] + H2O = (2E)-4-hydroxy-3-methylbut-2-enyl diphosphate + 2 reduced [2Fe-2S]-[ferredoxin] + 2 H(+). It carries out the reaction dimethylallyl diphosphate + 2 oxidized [2Fe-2S]-[ferredoxin] + H2O = (2E)-4-hydroxy-3-methylbut-2-enyl diphosphate + 2 reduced [2Fe-2S]-[ferredoxin] + 2 H(+). It participates in isoprenoid biosynthesis; dimethylallyl diphosphate biosynthesis; dimethylallyl diphosphate from (2E)-4-hydroxy-3-methylbutenyl diphosphate: step 1/1. The protein operates within isoprenoid biosynthesis; isopentenyl diphosphate biosynthesis via DXP pathway; isopentenyl diphosphate from 1-deoxy-D-xylulose 5-phosphate: step 6/6. Functionally, catalyzes the conversion of 1-hydroxy-2-methyl-2-(E)-butenyl 4-diphosphate (HMBPP) into a mixture of isopentenyl diphosphate (IPP) and dimethylallyl diphosphate (DMAPP). Acts in the terminal step of the DOXP/MEP pathway for isoprenoid precursor biosynthesis. This is 4-hydroxy-3-methylbut-2-enyl diphosphate reductase from Gloeothece citriformis (strain PCC 7424) (Cyanothece sp. (strain PCC 7424)).